The chain runs to 418 residues: Replication factor C large subunit (418 aa).

47-54 contributes to the ATP binding site; that stretch reads GSQGTGKT.

The protein belongs to the activator 1 small subunits family. RfcL subfamily. Heteromultimer composed of small subunits (RfcS) and large subunits (RfcL).

In terms of biological role, part of the RFC clamp loader complex which loads the PCNA sliding clamp onto DNA. This is Replication factor C large subunit from Thermoplasma acidophilum (strain ATCC 25905 / DSM 1728 / JCM 9062 / NBRC 15155 / AMRC-C165).